The following is a 195-amino-acid chain: Adenylate kinase (195 aa).

10–15 (GSGKGT) provides a ligand contact to ATP. The NMP stretch occupies residues 30–59 (STGDILRAERAAGTLLGQQAQSYMDRGELV). AMP is bound by residues Thr31, Arg36, 57–59 (ELV), 85–88 (GFPR), and Gln92. The LID stretch occupies residues 126-140 (NRAKQAVNGQQRSDD). Arg127 is a binding site for ATP. 2 residues coordinate AMP: Arg137 and Arg148. Residue Arg176 coordinates ATP.

This sequence belongs to the adenylate kinase family. Monomer.

The protein localises to the cytoplasm. It catalyses the reaction AMP + ATP = 2 ADP. Its pathway is purine metabolism; AMP biosynthesis via salvage pathway; AMP from ADP: step 1/1. Functionally, catalyzes the reversible transfer of the terminal phosphate group between ATP and AMP. Plays an important role in cellular energy homeostasis and in adenine nucleotide metabolism. This is Adenylate kinase from Thermosynechococcus vestitus (strain NIES-2133 / IAM M-273 / BP-1).